The following is a 91-amino-acid chain: Probable Fe(2+)-trafficking protein (91 aa).

This sequence belongs to the Fe(2+)-trafficking protein family.

Functionally, could be a mediator in iron transactions between iron acquisition and iron-requiring processes, such as synthesis and/or repair of Fe-S clusters in biosynthetic enzymes. The chain is Probable Fe(2+)-trafficking protein from Cellvibrio japonicus (strain Ueda107) (Pseudomonas fluorescens subsp. cellulosa).